The chain runs to 823 residues: Leucine--tRNA ligase (823 aa).

The 'HIGH' region signature appears at 55-65; sequence PYPSGNLHIGH. Residues 590–594 carry the 'KMSKS' region motif; it reads KMSKS. K593 contributes to the ATP binding site.

This sequence belongs to the class-I aminoacyl-tRNA synthetase family.

Its subcellular location is the cytoplasm. It catalyses the reaction tRNA(Leu) + L-leucine + ATP = L-leucyl-tRNA(Leu) + AMP + diphosphate. This is Leucine--tRNA ligase from Deinococcus radiodurans (strain ATCC 13939 / DSM 20539 / JCM 16871 / CCUG 27074 / LMG 4051 / NBRC 15346 / NCIMB 9279 / VKM B-1422 / R1).